We begin with the raw amino-acid sequence, 603 residues long: MPVRQLPETIVNRIAAGEVVERPASVVKELVENALDAGANRIEVFSDGGGRRRIAITDDGGGMTRADLELAVDRHATSKLDDEDLLAIRTLGFRGEALPSIGSVAKLSITTRHTEEPHAWALAVEGGTKSPLVPAALSQGTRVEVSDLFYATPARLKFLKTDRTEAEAIREVVRRLAMARPDVAFTLSGEERAPVSWAAVLPGAAGRLTRLSDILGAEFRKSAIEVRSERDGVVVEGFAGAPSLTRANALGQYLFVNGRPVRDRLIIGAVRAAYADYLPRDRHPVLALFVTCDPHEVDANVHPAKTEVRFRDAGLVRALIVHALKDGLSREGQRSAAASVDGATLAAFRPGFAPPPRANWDWRRSPSYPIAGSNAMDMAPGFAEREQAGFDVGLPSADVRNYAAPAAELIDRPLGAARTQIHETYIVAQTRTGLVIVDQHAAHERLVYEKLKASMASNGVQRQLLLIPEIVELDEATVEQLLDRAEELCSFGLAIDSFGPGAVAVREVPALLGKANAASLLRDLAEHMAEWDEALPLERRLLHVAATMACHGSVRAGRILKPEEMNALLREMEATPNSGQCNHGRPTYVELTLSDIEKLFGRR.

It belongs to the DNA mismatch repair MutL/HexB family.

This protein is involved in the repair of mismatches in DNA. It is required for dam-dependent methyl-directed DNA mismatch repair. May act as a 'molecular matchmaker', a protein that promotes the formation of a stable complex between two or more DNA-binding proteins in an ATP-dependent manner without itself being part of a final effector complex. The sequence is that of DNA mismatch repair protein MutL from Rhodopseudomonas palustris (strain BisA53).